The chain runs to 510 residues: Conditioned medium factor receptor 1 (510 aa).

At 1–36 (MDSKYIQKTLSAITEQITKNAAVQKVLDNKFVKEHK) the chain is on the cytoplasmic side. The helical transmembrane segment at 37–55 (YAAAAATVGLGVVAATTIV) threads the bilayer. At 56–510 (KAVNCEGKRY…QGKKQIKKLD (455 aa)) the chain is on the extracellular side.

The protein localises to the membrane. Receptor for cmfA, that appears to mediate the G-independent cmfA signal transduction. This chain is Conditioned medium factor receptor 1 (cmfB), found in Dictyostelium discoideum (Social amoeba).